A 470-amino-acid polypeptide reads, in one-letter code: Aromatic amino acid aminotransferase C569.07 (470 aa).

Belongs to the class-I pyridoxal-phosphate-dependent aminotransferase family. Pyridoxal 5'-phosphate is required as a cofactor.

The protein localises to the cytoplasm. The catalysed reaction is an aromatic L-alpha-amino acid + 2-oxoglutarate = an aromatic oxo-acid + L-glutamate. Its function is as follows. Has aromatic amino acid transaminase activity. This is Aromatic amino acid aminotransferase C569.07 from Schizosaccharomyces pombe (strain 972 / ATCC 24843) (Fission yeast).